A 313-amino-acid chain; its full sequence is Proline iminopeptidase (313 aa).

One can recognise an AB hydrolase-1 domain in the interval 35 to 298 (KPVVILHGGP…TPGAGHSAFE (264 aa)). Residue serine 110 is the Nucleophile of the active site. Residue aspartate 266 is part of the active site. Histidine 294 acts as the Proton donor in catalysis.

It belongs to the peptidase S33 family.

Its subcellular location is the cytoplasm. The catalysed reaction is Release of N-terminal proline from a peptide.. Functionally, specifically catalyzes the removal of N-terminal proline residues from peptides. This is Proline iminopeptidase (pip) from Xylella fastidiosa (strain 9a5c).